A 263-amino-acid chain; its full sequence is Protein PUN1 (263 aa).

At 1 to 6 (MRNFFT) the chain is on the cytoplasmic side. Residues 7 to 27 (LFFAAIFSLGALILAIVACAG) form a helical membrane-spanning segment. Residues 28–143 (STKNYSPINK…MTYYNNLVKC (116 aa)) lie on the Extracellular side of the membrane. The N-linked (GlcNAc...) asparagine glycan is linked to Asn100. Residues 144–164 (MFITILIGIVLTFVNLVFNVL) traverse the membrane as a helical segment. Topologically, residues 165 to 172 (RWIIHIRP) are cytoplasmic. Residues 173–193 (LTWFGAFFSFFAFAALLVSIG) traverse the membrane as a helical segment. The Extracellular segment spans residues 194 to 223 (SCLGTYSYIKYILKHNYSDYGISMSIGRNY). N-linked (GlcNAc...) asparagine glycosylation occurs at Asn209. A helical membrane pass occupies residues 224–244 (QGLMWGAVVGALLNFILWCSV). Residues 245-263 (RSRPTVIYANAPIEEKPLI) lie on the Cytoplasmic side of the membrane. A Glycyl lysine isopeptide (Lys-Gly) (interchain with G-Cter in ubiquitin) cross-link involves residue Lys260.

The protein belongs to the SUR7 family. N-glycosylated.

The protein localises to the cell membrane. In terms of biological role, contributes to the wild-type cellular response to nitrogen stress through signaling pathways that regulate the expression of genes involved in amino acid biosynthesis. Required for wild-type filamentous growth, cell growth, and cell-cell adhesion. The protein is Protein PUN1 (PUN1) of Saccharomyces cerevisiae (strain ATCC 204508 / S288c) (Baker's yeast).